The chain runs to 325 residues: Holliday junction branch migration complex subunit RuvB (325 aa).

Residues 1-180 form a large ATPase domain (RuvB-L) region; the sequence is MKNQLLDAKV…FGIHLKLNFY (180 aa). ATP is bound by residues Leu19, Arg20, Gly61, Lys64, Thr65, Thr66, 127–129, Arg170, Tyr180, and Arg217; that span reads EDF. Thr65 serves as a coordination point for Mg(2+). The tract at residues 181-251 is small ATPAse domain (RuvB-S); that stretch reads SCEELTKIVE…ITDYALNQLG (71 aa). The head domain (RuvB-H) stretch occupies residues 254–325; that stretch reads KLGLDSSDHK…ITANALKHLH (72 aa). DNA-binding residues include Arg290, Arg309, and Arg314.

This sequence belongs to the RuvB family. In terms of assembly, homohexamer. Forms an RuvA(8)-RuvB(12)-Holliday junction (HJ) complex. HJ DNA is sandwiched between 2 RuvA tetramers; dsDNA enters through RuvA and exits via RuvB. An RuvB hexamer assembles on each DNA strand where it exits the tetramer. Each RuvB hexamer is contacted by two RuvA subunits (via domain III) on 2 adjacent RuvB subunits; this complex drives branch migration. In the full resolvosome a probable DNA-RuvA(4)-RuvB(12)-RuvC(2) complex forms which resolves the HJ.

It is found in the cytoplasm. It catalyses the reaction ATP + H2O = ADP + phosphate + H(+). The RuvA-RuvB-RuvC complex processes Holliday junction (HJ) DNA during genetic recombination and DNA repair, while the RuvA-RuvB complex plays an important role in the rescue of blocked DNA replication forks via replication fork reversal (RFR). RuvA specifically binds to HJ cruciform DNA, conferring on it an open structure. The RuvB hexamer acts as an ATP-dependent pump, pulling dsDNA into and through the RuvAB complex. RuvB forms 2 homohexamers on either side of HJ DNA bound by 1 or 2 RuvA tetramers; 4 subunits per hexamer contact DNA at a time. Coordinated motions by a converter formed by DNA-disengaged RuvB subunits stimulates ATP hydrolysis and nucleotide exchange. Immobilization of the converter enables RuvB to convert the ATP-contained energy into a lever motion, pulling 2 nucleotides of DNA out of the RuvA tetramer per ATP hydrolyzed, thus driving DNA branch migration. The RuvB motors rotate together with the DNA substrate, which together with the progressing nucleotide cycle form the mechanistic basis for DNA recombination by continuous HJ branch migration. Branch migration allows RuvC to scan DNA until it finds its consensus sequence, where it cleaves and resolves cruciform DNA. The polypeptide is Holliday junction branch migration complex subunit RuvB (Orientia tsutsugamushi (strain Ikeda) (Rickettsia tsutsugamushi)).